Here is a 611-residue protein sequence, read N- to C-terminus: MPSRAVRRCPGHLCKEMRAPRRAQPPDVPAGEPGSRVTWSRQMDFIMSCVGFAVGLGNVWRFPYLCYKNGGGVFLIPYLLVAVFGGIPIFFLEISLGQFMKAGGINAWNIAPLFKGLGYASMVIVFFCNTYYILVLTWSSFYLVQSFSSPLPWASCNNTWNTAACYEAGANASTEIYPPTAPAQSSIVQFWERRVLRLSSGLGDVGEIGWELTLCLTATWMLVYFCIWKGVKTSGKVVYVTATFPYIILVILLVRGVTLHGAVQGIVYYLQPDWGKLGEAQVWIDAGTQIFFSYAIGLGTLTALGSYNQLHNDCYKDAFILSLVNSATSFFAGLVVFSILGFMAVEEGVDISVVAESGPGLAFIAYPKAVTLMPFPQVWAVLFFIMLLCLGLGSQFVGVEGFVTAILDLWPSKFSFRYLREVVVAMVICLSFLIDLSMITEGGMYIFQIFDYYSASGTTLLWTAFWECVAVAWVYGGDRYLDDLAWMLGYRPWALVKWCWSVITPLVCMGIFTFHLVNYKPLTYNKTYTYPWWGEAIGWCLALASMLCVPTTVLYSLSRGRGSLKERWRKLTTPVWASHHLAYKMAGAKINQPCEGVVSCEEKVVIFESVL.

The helical transmembrane segment at 45 to 65 (FIMSCVGFAVGLGNVWRFPYL) threads the bilayer. Topologically, residues 66–71 (CYKNGG) are extracellular. The helical transmembrane segment at 72–92 (GVFLIPYLLVAVFGGIPIFFL) threads the bilayer. Over 93 to 122 (EISLGQFMKAGGINAWNIAPLFKGLGYASM) the chain is Cytoplasmic. The chain crosses the membrane as a helical span at residues 123–143 (VIVFFCNTYYILVLTWSSFYL). Residues 144-207 (VQSFSSPLPW…LSSGLGDVGE (64 aa)) lie on the Extracellular side of the membrane. N-linked (GlcNAc...) asparagine glycosylation is found at N157 and N171. The chain crosses the membrane as a helical span at residues 208-228 (IGWELTLCLTATWMLVYFCIW). The Cytoplasmic portion of the chain corresponds to 229–246 (KGVKTSGKVVYVTATFPY). A helical membrane pass occupies residues 247–267 (IILVILLVRGVTLHGAVQGIV). Over 268-281 (YYLQPDWGKLGEAQ) the chain is Extracellular. A helical transmembrane segment spans residues 282–302 (VWIDAGTQIFFSYAIGLGTLT). The Cytoplasmic segment spans residues 303-318 (ALGSYNQLHNDCYKDA). A helical transmembrane segment spans residues 319–339 (FILSLVNSATSFFAGLVVFSI). The Extracellular portion of the chain corresponds to 340–371 (LGFMAVEEGVDISVVAESGPGLAFIAYPKAVT). Residues 372-392 (LMPFPQVWAVLFFIMLLCLGL) form a helical membrane-spanning segment. Residues 393–421 (GSQFVGVEGFVTAILDLWPSKFSFRYLRE) lie on the Cytoplasmic side of the membrane. Residues 422 to 442 (VVVAMVICLSFLIDLSMITEG) traverse the membrane as a helical segment. Residues 443 to 456 (GMYIFQIFDYYSAS) lie on the Extracellular side of the membrane. A helical membrane pass occupies residues 457–477 (GTTLLWTAFWECVAVAWVYGG). Over 478 to 497 (DRYLDDLAWMLGYRPWALVK) the chain is Cytoplasmic. A helical transmembrane segment spans residues 498-518 (WCWSVITPLVCMGIFTFHLVN). The Extracellular segment spans residues 519 to 537 (YKPLTYNKTYTYPWWGEAI). N525 carries N-linked (GlcNAc...) asparagine glycosylation. Residues 538–558 (GWCLALASMLCVPTTVLYSLS) form a helical membrane-spanning segment. Residues 559 to 611 (RGRGSLKERWRKLTTPVWASHHLAYKMAGAKINQPCEGVVSCEEKVVIFESVL) lie on the Cytoplasmic side of the membrane.

Belongs to the sodium:neurotransmitter symporter (SNF) (TC 2.A.22) family.

Its subcellular location is the membrane. In terms of biological role, required for the uptake of creatine. This chain is Creatine transporter, found in Torpedo marmorata (Marbled electric ray).